We begin with the raw amino-acid sequence, 652 residues long: Bifunctional protein ThiO/ThiG (652 aa).

A thiO region spans residues 1–366 (MTRDIVIIGG…HYSRFQKQAS (366 aa)). Residues 5–19 (IVIIGGGVIGLAIAV) and 44–46 (AGM) each bind FAD. Glutamate 52 is a binding site for glycine. Valine 173 contacts FAD. 2 residues coordinate glycine: arginine 301 and arginine 327. Position 325–331 (325–331 (HYRNGIL)) interacts with FAD. Residues 393–652 (SLIIAGKSFH…ASSPVTGTIS (260 aa)) form a thiG region. Lysine 494 acts as the Schiff-base intermediate with DXP in catalysis. 1-deoxy-D-xylulose 5-phosphate is bound by residues glycine 555, 581–582 (AG), and 603–604 (NS).

The protein in the N-terminal section; belongs to the DAO family. ThiO subfamily. It in the C-terminal section; belongs to the ThiG family. As to quaternary structure, interacts with ThiH and ThiS. It depends on FAD as a cofactor.

The protein resides in the cytoplasm. It catalyses the reaction glycine + O2 + H2O = glyoxylate + H2O2 + NH4(+). The enzyme catalyses [ThiS sulfur-carrier protein]-C-terminal-Gly-aminoethanethioate + 2-iminoacetate + 1-deoxy-D-xylulose 5-phosphate = [ThiS sulfur-carrier protein]-C-terminal Gly-Gly + 2-[(2R,5Z)-2-carboxy-4-methylthiazol-5(2H)-ylidene]ethyl phosphate + 2 H2O + H(+). It participates in cofactor biosynthesis; thiamine diphosphate biosynthesis. Its function is as follows. Catalyzes the FAD-dependent oxidative deamination of glycine. Is essential for thiamine biosynthesis since the oxidation of glycine catalyzed by ThiO generates the glycine imine intermediate (dehydroglycine) required for the biosynthesis of the thiazole ring of thiamine pyrophosphate. Catalyzes the rearrangement of 1-deoxy-D-xylulose 5-phosphate (DXP) to produce the thiazole phosphate moiety of thiamine. Sulfur is provided by the thiocarboxylate moiety of the carrier protein ThiS. In vitro, sulfur can be provided by H(2)S. The chain is Bifunctional protein ThiO/ThiG (thiO/thiG) from Trichormus variabilis (strain ATCC 29413 / PCC 7937) (Anabaena variabilis).